The primary structure comprises 455 residues: Venom prothrombin activator nigrarin-D (455 aa).

A signal peptide spans 1 to 20 (MAPPLLLCLILTFLWNLPEA). A propeptide spanning residues 21–40 (ESNVFLKSKVANRFLQRTKR) is cleaved from the precursor. Residues 41-86 (SNSIFEEFKAGNIERECIEEKCSKEEAREVFEDNEKTETFWNVYVD) enclose the Gla domain. 4-carboxyglutamate is present on residues Glu-46, Glu-47, Glu-54, Glu-56, Glu-59, Glu-60, Glu-65, Glu-66, Glu-69, Glu-72, and Glu-75. Cys-57 and Cys-62 form a disulfide bridge. Positions 86-122 (DGDQCSSNPCHYRGTCKDGIGSYTCTCLPNYEGKNCE) constitute an EGF-like 1; calcium-binding domain. 11 disulfides stabilise this stretch: Cys-90/Cys-101, Cys-95/Cys-110, Cys-112/Cys-121, Cys-129/Cys-140, Cys-136/Cys-149, Cys-151/Cys-164, Cys-172/Cys-328, Cys-216/Cys-221, Cys-236/Cys-252, Cys-376/Cys-390, and Cys-401/Cys-429. An O-linked (Hex...) serine glycan is attached at Ser-92. Residues 129–164 (CRVFNGNCWHFCKSVQNEIQCSCAESYRLGDDGHSC) enclose the EGF-like 2 domain. Positions 182–209 (REASLPDFVQSQKAILLKKSDNPSPDIR) are cleaved as a propeptide — activation peptide. A Peptidase S1 domain is found at 210-453 (IINGMDCKLG…FIPWIKAIMS (244 aa)). The Charge relay system role is filled by His-251. The N-linked (GlcNAc...) asparagine glycan is linked to Asn-254. Catalysis depends on Asp-308, which acts as the Charge relay system. Ser-405 functions as the Charge relay system in the catalytic mechanism.

Belongs to the peptidase S1 family. Snake venom subfamily. Heterodimer of a light chain and a heavy chain; disulfide-linked. In terms of processing, the vitamin K-dependent, enzymatic carboxylation of some glutamate residues allows the modified protein to bind calcium. In terms of tissue distribution, expressed by the venom gland.

The protein localises to the secreted. It carries out the reaction Selective cleavage of Arg-|-Thr and then Arg-|-Ile bonds in prothrombin to form thrombin.. Functionally, snake prothrombin activator that attacks the hemostatic system of prey. This protein is functionally similar to blood coagulation factor Xa. In Cryptophis nigrescens (Eastern small-eyed snake), this protein is Venom prothrombin activator nigrarin-D.